A 131-amino-acid chain; its full sequence is UPF0102 protein RPD_0400 (131 aa).

Belongs to the UPF0102 family.

The sequence is that of UPF0102 protein RPD_0400 from Rhodopseudomonas palustris (strain BisB5).